The sequence spans 138 residues: Cysteine desulfuration protein SufE (138 aa).

Residue cysteine 51 is the Cysteine persulfide intermediate of the active site.

This sequence belongs to the SufE family. As to quaternary structure, homodimer. Interacts with SufS.

Its subcellular location is the cytoplasm. It participates in cofactor biosynthesis; iron-sulfur cluster biosynthesis. Participates in cysteine desulfuration mediated by SufS. Cysteine desulfuration mobilizes sulfur from L-cysteine to yield L-alanine and constitutes an essential step in sulfur metabolism for biosynthesis of a variety of sulfur-containing biomolecules. Functions as a sulfur acceptor for SufS, by mediating the direct transfer of the sulfur atom from the S-sulfanylcysteine of SufS, an intermediate product of cysteine desulfuration process. The chain is Cysteine desulfuration protein SufE from Escherichia fergusonii (strain ATCC 35469 / DSM 13698 / CCUG 18766 / IAM 14443 / JCM 21226 / LMG 7866 / NBRC 102419 / NCTC 12128 / CDC 0568-73).